Reading from the N-terminus, the 86-residue chain is uncharacterized protein (86 aa).

The signal sequence occupies residues 1-31 (MKQKLLLSGLAVSTVGITSYLLKDPSNRQKA). Positions 46–69 (PDMETFPVDKAGHPDPQDIEDNKM) are disordered. Residues 55-69 (KAGHPDPQDIEDNKM) are compositionally biased toward basic and acidic residues.

This is an uncharacterized protein from Bacillus subtilis (strain 168).